The sequence spans 472 residues: D-inositol 3-phosphate glycosyltransferase (472 aa).

A 1D-myo-inositol 3-phosphate-binding site is contributed by His48. UDP-N-acetyl-alpha-D-glucosamine-binding positions include 54–55 (QP) and Gly62. 1D-myo-inositol 3-phosphate is bound by residues 59–64 (DAGGMN), Lys117, Tyr150, Thr174, and Arg194. Residues Arg282, Lys287, and Val348 each contribute to the UDP-N-acetyl-alpha-D-glucosamine site. Residues Phe357, Arg358, and Ala360 each contribute to the Mg(2+) site. UDP-N-acetyl-alpha-D-glucosamine-binding residues include Glu370 and Glu378. Residue Thr384 participates in Mg(2+) binding.

This sequence belongs to the glycosyltransferase group 1 family. MshA subfamily. Homodimer.

The catalysed reaction is 1D-myo-inositol 3-phosphate + UDP-N-acetyl-alpha-D-glucosamine = 1D-myo-inositol 2-acetamido-2-deoxy-alpha-D-glucopyranoside 3-phosphate + UDP + H(+). Functionally, catalyzes the transfer of a N-acetyl-glucosamine moiety to 1D-myo-inositol 3-phosphate to produce 1D-myo-inositol 2-acetamido-2-deoxy-glucopyranoside 3-phosphate in the mycothiol biosynthesis pathway. The sequence is that of D-inositol 3-phosphate glycosyltransferase from Streptomyces griseus subsp. griseus (strain JCM 4626 / CBS 651.72 / NBRC 13350 / KCC S-0626 / ISP 5235).